Here is a 364-residue protein sequence, read N- to C-terminus: Long-wave-sensitive opsin 1 (364 aa).

Residues 1 to 52 lie on the Extracellular side of the membrane; sequence MAHAWGPQRLAGGQPQANFEESTQGSIFTYTNSNSTRDPFEGPNYHIAPRWV. Ser-22 carries O-linked (GlcNAc) serine glycosylation. Asn-34 carries N-linked (GlcNAc...) asparagine glycosylation. Residues 53–77 traverse the membrane as a helical segment; it reads YHLTSAWMVFVVIASVFTNGLVLAA. Residues 78-89 lie on the Cytoplasmic side of the membrane; sequence TMRFKKLRHPLN. The chain crosses the membrane as a helical span at residues 90-115; that stretch reads WILVNLAIADLAETIIASTISVVNQM. The Extracellular portion of the chain corresponds to 116–129; it reads YGYFVLGHPLCVVE. Cys-126 and Cys-203 are disulfide-bonded. The helical transmembrane segment at 130 to 149 threads the bilayer; sequence GYTVSLCGITGLWSLAIISW. Over 150-168 the chain is Cytoplasmic; it reads ERWMVVCKPFGNVRFDAKL. The chain crosses the membrane as a helical span at residues 169 to 192; sequence AITGIAFSWIWAAVWTAPPIFGWS. The Extracellular segment spans residues 193–218; the sequence is RYWPHGLKTSCGPDVFSGSSYPGVQS. Residues 219-246 form a helical membrane-spanning segment; sequence YMIVLMITCCFIPLSVIILCYLQVWLAI. Topologically, residues 247–268 are cytoplasmic; it reads RAVAKQQKESESTQKAEKEVTR. The chain crosses the membrane as a helical span at residues 269 to 292; sequence MVMVMIFAYCLCWGPYTFFACFAA. The Extracellular segment spans residues 293-300; it reads AHPGYAFH. A helical membrane pass occupies residues 301–325; sequence PLVAALPAYFAKSATIYNPIIYVFM. Lys-312 carries the N6-(retinylidene)lysine modification. The Cytoplasmic portion of the chain corresponds to 326–364; that stretch reads NRQFRNCILQLFGKKVDDSSELSSVSKTEASSVSSVSPA.

It belongs to the G-protein coupled receptor 1 family. Opsin subfamily. Phosphorylated on some or all of the serine and threonine residues present in the C-terminal region. As to expression, expressed in retina (at protein level). Expressed in cone and/or rod photoreceptor cells (at protein level).

It localises to the membrane. In terms of biological role, visual pigments are the light-absorbing molecules that mediate vision. They consist of an apoprotein, opsin, covalently linked to cis-retinal. This chain is Long-wave-sensitive opsin 1 (OPN1LW), found in Bos taurus (Bovine).